The following is a 277-amino-acid chain: Large ribosomal subunit protein uL2 (277 aa).

Disordered stretches follow at residues 35 to 57 (RPLHSKGGRNVHGRITTRHQGGG) and 222 to 277 (GVAM…NRRR). Basic residues-rich tracts occupy residues 37–57 (LHSKGGRNVHGRITTRHQGGG) and 268–277 (VRRRKQNRRR).

This sequence belongs to the universal ribosomal protein uL2 family. Part of the 50S ribosomal subunit. Forms a bridge to the 30S subunit in the 70S ribosome.

Functionally, one of the primary rRNA binding proteins. Required for association of the 30S and 50S subunits to form the 70S ribosome, for tRNA binding and peptide bond formation. It has been suggested to have peptidyltransferase activity; this is somewhat controversial. Makes several contacts with the 16S rRNA in the 70S ribosome. The chain is Large ribosomal subunit protein uL2 from Frankia casuarinae (strain DSM 45818 / CECT 9043 / HFP020203 / CcI3).